The sequence spans 229 residues: Potassium/proton antiporter CemA (229 aa).

A run of 3 helical transmembrane segments spans residues 7 to 27 (FTPL…SFSF), 114 to 134 (LICF…LVIL), and 189 to 209 (ILSG…KYWI).

Belongs to the CemA family.

The protein resides in the plastid. Its subcellular location is the chloroplast inner membrane. The enzyme catalyses K(+)(in) + H(+)(out) = K(+)(out) + H(+)(in). Its function is as follows. Contributes to K(+)/H(+) antiport activity by supporting proton efflux to control proton extrusion and homeostasis in chloroplasts in a light-dependent manner to modulate photosynthesis. Prevents excessive induction of non-photochemical quenching (NPQ) under continuous-light conditions. Indirectly promotes efficient inorganic carbon uptake into chloroplasts. This is Potassium/proton antiporter CemA from Ipomoea purpurea (Common morning glory).